A 1347-amino-acid polypeptide reads, in one-letter code: Protocadherin-11 X-linked (1347 aa).

Residues 1–23 (MDLLSGTYIFAVLLACVVFHSGA) form the signal peptide. The Extracellular portion of the chain corresponds to 24 to 812 (QEKNYTIREE…VSSPTSDYVK (789 aa)). Cadherin domains follow at residues 26 to 139 (KNYT…APLF), 140 to 249 (PATV…HPVF), 250 to 355 (KETE…VPSI), 362 to 466 (NPVN…APVF), 467 to 570 (TQSF…SPVF), 571 to 673 (THNE…KPVF), and 677 to 795 (PSNY…APVT). 3 N-linked (GlcNAc...) asparagine glycosylation sites follow: Asn-27, Asn-48, and Asn-54. N-linked (GlcNAc...) asparagine glycosylation is present at Asn-344. The N-linked (GlcNAc...) asparagine glycan is linked to Asn-553. Asn-773 carries N-linked (GlcNAc...) asparagine glycosylation. A helical transmembrane segment spans residues 813–833 (ILVAAVAGTITVVVVIFITAV). Over 834 to 1347 (VRCRQAPHLK…DSPVMEEHPL (514 aa)) the chain is Cytoplasmic. Disordered regions lie at residues 1057 to 1091 (LPEGSQESSSDGGLGDHDAGSLTSTSHGLPLGYPQ), 1097 to 1116 (RATPSNRTEGDGNSDPESTF), and 1325 to 1347 (TFTPRQQARPSRGDSPVMEEHPL).

Its subcellular location is the cell membrane. Functionally, potential calcium-dependent cell-adhesion protein. In Pan troglodytes (Chimpanzee), this protein is Protocadherin-11 X-linked (PCDH11X).